Reading from the N-terminus, the 377-residue chain is Transcription initiation factor IIA subunit 1 (377 aa).

An N-acetylalanine modification is found at Ala2. Low complexity-rich tracts occupy residues Gln69 to Gln79, Gln89 to Val105, and Gln248 to Thr280. Disordered stretches follow at residues Gln69 to Ile107 and Gln248 to Phe330. Ser281 and Ser282 each carry phosphoserine; by TAF1. The span at Ser281–Phe330 shows a compositional bias: acidic residues. Ser317 and Ser322 each carry phosphoserine. Residues His344 and Arg345 each contribute to the DNA site.

The protein belongs to the TFIIA subunit 1 family. TFIIA is a heterodimer of the large unprocessed subunit 1 and a small subunit gamma. It was originally believed to be a heterotrimer of an alpha (p35), a beta (p19) and a gamma subunit (p12). TFIIA forms a complex with TBP. Part of TBP-based Pol II pre-initiation complex (PIC), in which Pol II core assembles with general transcription factors and other specific initiation factors including GTF2E1, GTF2E2, GTF2F1, GTF2F2, TCEA1, ERCC2, ERCC3, GTF2H2, GTF2H3, GTF2H4, GTF2H5, GTF2A1, GTF2A2, GTF2B and TBP; this large multi-subunit PIC complex mediates DNA unwinding and targets Pol II core to the transcription start site where the first phosphodiester bond forms. The alpha and beta subunits are postranslationally produced from the precursor formby TASP1. The cleavage promotes proteasomal degradation.

It is found in the nucleus. Its function is as follows. TFIIA is a component of the transcription machinery of RNA polymerase II and plays an important role in transcriptional activation. TFIIA in a complex with TBP mediates transcriptional activity. The polypeptide is Transcription initiation factor IIA subunit 1 (Gtf2a1) (Rattus norvegicus (Rat)).